The following is a 444-amino-acid chain: MRLSRFFLPILKENPKEAEIVSHRLMLRAGMLRQEAAGIYAWLPLGFKVLKKIEQIVREEQNRAGALELLMPTLQLADLWRESGRYDAYGPEMLRISDRHKRELLYGPTNEEMITDIFRAYVKSYRNLPLNLYHIQWKFRDEQRPRFGVMRGREFLMKDAYSFDLDEAGARRAYNKMFVAYLRTFARMGLKGIPMRAETGPIGGDLSHEFIVLAETGESGVYCDRDVLDLPIPPASVDYDGDLTPIIKQWTSLYAATEDVHDGARFEAEVPEERRLHTRGIEVGQIFYFGTKYSEPMKALVAGPDGAEVTIHGGSYGVGVSRLAGAIIEACHDDAGIKWPEEVAPFRAVILNLKQGGSDTDAACEQLYRDLLAKGVDVLYDDTEQRAGGKFATADLIGIPWQIMVGPKSLAEGKVEVKTRSDGARQMMSPADVVARLGGGTVAG.

Belongs to the class-II aminoacyl-tRNA synthetase family. ProS type 2 subfamily. Homodimer.

Its subcellular location is the cytoplasm. The enzyme catalyses tRNA(Pro) + L-proline + ATP = L-prolyl-tRNA(Pro) + AMP + diphosphate. In terms of biological role, catalyzes the attachment of proline to tRNA(Pro) in a two-step reaction: proline is first activated by ATP to form Pro-AMP and then transferred to the acceptor end of tRNA(Pro). This chain is Proline--tRNA ligase, found in Bradyrhizobium sp. (strain BTAi1 / ATCC BAA-1182).